The sequence spans 267 residues: Small ribosomal subunit protein uS5 (267 aa).

The interval 1-37 (MADEAPARSGFRGGFGSRGGRGGRGRGRGRWARGRGK) is disordered. Residues 11-20 (FRGGFGSRGG) show a composition bias toward gly residues. Basic residues predominate over residues 21 to 34 (RGGRGRGRGRWARG). Ser-60 bears the Phosphoserine mark. One can recognise an S5 DRBM domain in the interval 85-148 (LKDEVLKIMP…ILAKLSVVPV (64 aa)).

The protein belongs to the universal ribosomal protein uS5 family.

In terms of biological role, component of the ribosome, a large ribonucleoprotein complex responsible for the synthesis of proteins in the cell. The small ribosomal subunit (SSU) binds messenger RNAs (mRNAs) and translates the encoded message by selecting cognate aminoacyl-transfer RNA (tRNA) molecules. The large subunit (LSU) contains the ribosomal catalytic site termed the peptidyl transferase center (PTC), which catalyzes the formation of peptide bonds, thereby polymerizing the amino acids delivered by tRNAs into a polypeptide chain. The nascent polypeptides leave the ribosome through a tunnel in the LSU and interact with protein factors that function in enzymatic processing, targeting, and the membrane insertion of nascent chains at the exit of the ribosomal tunnel. Plays a role in the assembly and function of the 40S ribosomal subunit. Mutations in this protein affects the control of translational fidelity. Involved in nucleolar processing of pre-18S ribosomal RNA and ribosome assembly. Has a specific developmental role during oogenesis. In Drosophila melanogaster (Fruit fly), this protein is Small ribosomal subunit protein uS5 (RpS2).